The following is an 81-amino-acid chain: Mipartoxin-2 (81 aa).

An N-terminal signal peptide occupies residues 1–21 (MKTLLLTLVVVTIVCLDLGNS). Disulfide bonds link Cys-24–Cys-42, Cys-35–Cys-61, Cys-65–Cys-73, and Cys-74–Cys-79.

It belongs to the three-finger toxin family. Short-chain subfamily. As to expression, expressed by the venom gland.

It is found in the secreted. Its function is as follows. Snake venom neurotoxin that blocks neuromuscular transmission, presenting a postsynaptic action through the nicotinic acetylcholine receptor (nAChR). Has no cytotoxic activity. The chain is Mipartoxin-2 from Micrurus mipartitus (Red-tailed coral snake).